The sequence spans 461 residues: MSLRLKLHNTLTREKSEFAPIDADNVRMYVCGPTVYDFAHIGNARPVIVFDVLFRLLRHVYGEDHVTYARNITDLDDKINARALRDYPHLPLNDAIHAVTKKTADQFHDDVAALGCLQPTVEPRATDYIAEMIYLIERLIERGHAYKAGGEVLFDTRSMADYGQLSKRPLDEQQAGARVAVEAHKKNPGDFVLWKLSSESEPGWESPWGLGRPGWHIECSAMAGRYLGEVFDIHGGGLDLIFPHHENEIAQSRCAHGTHVMANVWMHNGFVQVEGRKMSKSEGNFVTIYELLHTDKFGGRQWPGEVLRLAMLMTHYREPIDFSVKRLEEAERLLSKWPAAETSDAAADETVLEALADDLNTVAAVQALHALAHAANTDPSRLPAFAASAALLGVLPKKTEMDEAIVSAVDALVELRLEMLKAKNFAEADRLRDELSEKGIQLKDGKDKETGERTTTWELKR.

Zn(2+) is bound at residue cysteine 31. The 'HIGH' region signature appears at 33-43 (PTVYDFAHIGN). 3 residues coordinate Zn(2+): cysteine 219, histidine 244, and glutamate 248. The 'KMSKS' region motif lies at 277–281 (KMSKS). Residue lysine 280 participates in ATP binding. Residues 436-452 (SEKGIQLKDGKDKETGE) show a composition bias toward basic and acidic residues. Positions 436–461 (SEKGIQLKDGKDKETGERTTTWELKR) are disordered.

It belongs to the class-I aminoacyl-tRNA synthetase family. As to quaternary structure, monomer. Zn(2+) serves as cofactor.

The protein localises to the cytoplasm. It catalyses the reaction tRNA(Cys) + L-cysteine + ATP = L-cysteinyl-tRNA(Cys) + AMP + diphosphate. This Agrobacterium fabrum (strain C58 / ATCC 33970) (Agrobacterium tumefaciens (strain C58)) protein is Cysteine--tRNA ligase.